The sequence spans 398 residues: Putative F-box protein At3g17620 (398 aa).

In terms of domain architecture, F-box spans 1 to 45 (MMSDLPRDLLEERLSRVPVKSLREARFTCKNWKTLSKKRSFTKKH).

The protein is Putative F-box protein At3g17620 of Arabidopsis thaliana (Mouse-ear cress).